The sequence spans 333 residues: Protein-methionine-sulfoxide reductase catalytic subunit MsrP (333 aa).

The tat-type signal signal peptide spans 1–43; the sequence is MHKHRKPTEADVTPESLFYQRRRVLKALGISAAALSLPLSAQA. Mo-molybdopterin-binding positions include Asn-87, 90–91, Cys-145, Thr-180, Asn-232, Arg-237, and 248–250; these read YE and NIK.

The protein belongs to the MsrP family. In terms of assembly, heterodimer of a catalytic subunit (MsrP) and a heme-binding subunit (MsrQ). Mo-molybdopterin serves as cofactor. In terms of processing, predicted to be exported by the Tat system. The position of the signal peptide cleavage has not been experimentally proven.

The protein localises to the periplasm. It carries out the reaction L-methionyl-[protein] + a quinone + H2O = L-methionyl-(S)-S-oxide-[protein] + a quinol. It catalyses the reaction L-methionyl-[protein] + a quinone + H2O = L-methionyl-(R)-S-oxide-[protein] + a quinol. Functionally, part of the MsrPQ system that repairs oxidized periplasmic proteins containing methionine sulfoxide residues (Met-O), using respiratory chain electrons. Thus protects these proteins from oxidative-stress damage caused by reactive species of oxygen and chlorine generated by the host defense mechanisms. MsrPQ is essential for the maintenance of envelope integrity under bleach stress, rescuing a wide series of structurally unrelated periplasmic proteins from methionine oxidation. The catalytic subunit MsrP is non-stereospecific, being able to reduce both (R-) and (S-) diastereoisomers of methionine sulfoxide. The chain is Protein-methionine-sulfoxide reductase catalytic subunit MsrP from Pectobacterium atrosepticum (strain SCRI 1043 / ATCC BAA-672) (Erwinia carotovora subsp. atroseptica).